We begin with the raw amino-acid sequence, 281 residues long: Pantothenate synthetase (281 aa).

Residue Met-30–His-37 coordinates ATP. Residue His-37 is the Proton donor of the active site. Gln-61 lines the (R)-pantoate pocket. Gln-61 contacts beta-alanine. Gly-147–Asp-150 contacts ATP. Residue Gln-153 participates in (R)-pantoate binding. ATP-binding positions include Val-176 and Met-184–Arg-187.

This sequence belongs to the pantothenate synthetase family. In terms of assembly, homodimer.

The protein localises to the cytoplasm. The catalysed reaction is (R)-pantoate + beta-alanine + ATP = (R)-pantothenate + AMP + diphosphate + H(+). It functions in the pathway cofactor biosynthesis; (R)-pantothenate biosynthesis; (R)-pantothenate from (R)-pantoate and beta-alanine: step 1/1. Its function is as follows. Catalyzes the condensation of pantoate with beta-alanine in an ATP-dependent reaction via a pantoyl-adenylate intermediate. The chain is Pantothenate synthetase from Acetivibrio thermocellus (strain ATCC 27405 / DSM 1237 / JCM 9322 / NBRC 103400 / NCIMB 10682 / NRRL B-4536 / VPI 7372) (Clostridium thermocellum).